We begin with the raw amino-acid sequence, 174 residues long: uncharacterized protein (174 aa).

Residues 42–174 form the N-acetyltransferase domain; that stretch reads SSNKNINLYE…GVKGMFWYPR (133 aa).

It belongs to the acetyltransferase family. Ycf52 subfamily.

It localises to the plastid. It is found in the chloroplast. This is an uncharacterized protein from Pyropia yezoensis (Susabi-nori).